The chain runs to 392 residues: MAMPTIRHVRAFIVRGGGADYHDQPGGHWIDDHISTPMARYPEYRQSRQSFGINVLGTLVVEIEASDGTVGFAVTTGGEIGAFIVEKHLARFLEGQLVTDIEKMWDQMYFSTLYYGRKGVVLNTISGVDLALWDLLAKVRKEPVYQLLGGPVRDELVFYATGARPDLAKEMGFIGGKLPLQHGPAEGEAGLKQNLEKLADMRSRVGDDFWLMYDCWMSLDVPYATRLAQAAHEYGLKWIEECLPPDDYWGYAELRRNVPRGMMVSTGEHEATRWGFRMLLEMQCCDLIQPDVGWCGGITELIKISALADAHNVMVVPHGSSVYSYHFVVTRHNSPFAEFLMMAPKADEVVPMFTPLLLDEPVPVNGRMKVPDTPGFGVRLNPECALVRPYPR.

2 residues coordinate substrate: His-22 and Arg-48. Mg(2+)-binding residues include Asp-214, Glu-240, and Glu-268. The Proton acceptor role is filled by His-318. Glu-338 is a substrate binding site.

The protein belongs to the mandelate racemase/muconate lactonizing enzyme family. RhamD subfamily. As to quaternary structure, homooctamer; tetramer of dimers. Requires Mg(2+) as cofactor.

The catalysed reaction is L-rhamnonate = 2-dehydro-3-deoxy-L-rhamnonate + H2O. Catalyzes the dehydration of L-rhamnonate to 2-keto-3-deoxy-L-rhamnonate (KDR). In Paraburkholderia phytofirmans (strain DSM 17436 / LMG 22146 / PsJN) (Burkholderia phytofirmans), this protein is L-rhamnonate dehydratase.